Reading from the N-terminus, the 333-residue chain is Holliday junction branch migration complex subunit RuvB (333 aa).

Residues 1–182 (MDERLLSGES…FGVLSRLEYY (182 aa)) form a large ATPase domain (RuvB-L) region. Residues L21, R22, G63, K66, T67, T68, 129-131 (EDF), R172, Y182, and R219 contribute to the ATP site. T67 provides a ligand contact to Mg(2+). Residues 183-253 (TVDQLSAIVE…ITQMALELLQ (71 aa)) form a small ATPAse domain (RuvB-S) region. The interval 256–333 (KLGLDHIDHK…EHFGMEIPKV (78 aa)) is head domain (RuvB-H). DNA contacts are provided by R311 and R316.

The protein belongs to the RuvB family. In terms of assembly, homohexamer. Forms an RuvA(8)-RuvB(12)-Holliday junction (HJ) complex. HJ DNA is sandwiched between 2 RuvA tetramers; dsDNA enters through RuvA and exits via RuvB. An RuvB hexamer assembles on each DNA strand where it exits the tetramer. Each RuvB hexamer is contacted by two RuvA subunits (via domain III) on 2 adjacent RuvB subunits; this complex drives branch migration. In the full resolvosome a probable DNA-RuvA(4)-RuvB(12)-RuvC(2) complex forms which resolves the HJ.

Its subcellular location is the cytoplasm. The catalysed reaction is ATP + H2O = ADP + phosphate + H(+). Functionally, the RuvA-RuvB-RuvC complex processes Holliday junction (HJ) DNA during genetic recombination and DNA repair, while the RuvA-RuvB complex plays an important role in the rescue of blocked DNA replication forks via replication fork reversal (RFR). RuvA specifically binds to HJ cruciform DNA, conferring on it an open structure. The RuvB hexamer acts as an ATP-dependent pump, pulling dsDNA into and through the RuvAB complex. RuvB forms 2 homohexamers on either side of HJ DNA bound by 1 or 2 RuvA tetramers; 4 subunits per hexamer contact DNA at a time. Coordinated motions by a converter formed by DNA-disengaged RuvB subunits stimulates ATP hydrolysis and nucleotide exchange. Immobilization of the converter enables RuvB to convert the ATP-contained energy into a lever motion, pulling 2 nucleotides of DNA out of the RuvA tetramer per ATP hydrolyzed, thus driving DNA branch migration. The RuvB motors rotate together with the DNA substrate, which together with the progressing nucleotide cycle form the mechanistic basis for DNA recombination by continuous HJ branch migration. Branch migration allows RuvC to scan DNA until it finds its consensus sequence, where it cleaves and resolves cruciform DNA. In Bacillus cereus (strain B4264), this protein is Holliday junction branch migration complex subunit RuvB.